Consider the following 469-residue polypeptide: Ubiquitin carboxyl-terminal hydrolase MINDY-1 (469 aa).

The interval 1 to 105 is disordered; sequence MEHHQPEHPA…RLQELPQSPR (105 aa). Basic and acidic residues predominate over residues 23-44; it reads ENHKVLSEPKEHPQDKDAKEAD. Phosphoserine is present on S103. The active-site Nucleophile is the C137. Residue H319 is the Proton acceptor of the active site. The interval 388-428 is ubiquitin-binding domain (UBD); it reads QVDQDYLIALSLQQQQPPPQGTSGLSDLELAQQLQQEEYQQ. The tract at residues 401–469 is disordered; the sequence is QQQPPPQGTS…PKQESDCVLL (69 aa). Residues 415 to 448 show a composition bias toward low complexity; the sequence is LELAQQLQQEEYQQHQAAQAAPARAPSPQGRGAA. S441 is modified (phosphoserine). The span at 453–469 shows a compositional bias: basic and acidic residues; it reads AAERRQRPKQESDCVLL.

Belongs to the MINDY deubiquitinase family. FAM63 subfamily.

The catalysed reaction is Thiol-dependent hydrolysis of ester, thioester, amide, peptide and isopeptide bonds formed by the C-terminal Gly of ubiquitin (a 76-residue protein attached to proteins as an intracellular targeting signal).. Hydrolase that can specifically remove 'Lys-48'-linked conjugated ubiquitin from proteins. Has exodeubiquitinase activity and has a preference for long polyubiquitin chains. May play a regulatory role at the level of protein turnover. This Bos taurus (Bovine) protein is Ubiquitin carboxyl-terminal hydrolase MINDY-1 (MINDY1).